The chain runs to 383 residues: tRNA-specific 2-thiouridylase MnmA (383 aa).

Residues 16-23 (AMSGGVDS) and Leu42 each bind ATP. Cys110 serves as the catalytic Nucleophile. A disulfide bridge links Cys110 with Cys209. Gly134 is a binding site for ATP. The interval 159–161 (KDQ) is interaction with tRNA. Residue Cys209 is the Cysteine persulfide intermediate of the active site.

This sequence belongs to the MnmA/TRMU family.

Its subcellular location is the cytoplasm. It carries out the reaction S-sulfanyl-L-cysteinyl-[protein] + uridine(34) in tRNA + AH2 + ATP = 2-thiouridine(34) in tRNA + L-cysteinyl-[protein] + A + AMP + diphosphate + H(+). Functionally, catalyzes the 2-thiolation of uridine at the wobble position (U34) of tRNA, leading to the formation of s(2)U34. In Caulobacter vibrioides (strain ATCC 19089 / CIP 103742 / CB 15) (Caulobacter crescentus), this protein is tRNA-specific 2-thiouridylase MnmA.